A 289-amino-acid polypeptide reads, in one-letter code: ATP synthase mitochondrial F1 complex assembly factor 2 (289 aa).

A mitochondrion-targeting transit peptide spans 1-40; it reads MWRIYPRLRDRWRGLLDRRLSDPTVSVWPGPAPQPPARAY. Lys-133 is modified (N6-succinyllysine).

This sequence belongs to the ATP12 family. As to quaternary structure, interacts with ATP5F1B; involved in the assembly of the F1 component of the mitochondrial ATP synthase (ATPase). Interacts with FMC1.

The protein resides in the mitochondrion inner membrane. Its function is as follows. Plays a role in the assembly of the F1 component of the mitochondrial ATP synthase (ATPase). The polypeptide is ATP synthase mitochondrial F1 complex assembly factor 2 (Mus musculus (Mouse)).